Consider the following 455-residue polypeptide: MASLNENQKFWARVTELAQQSIGKQAYDFFIEPAQLMSVEQDTANILLDSGMKKDYWKKQSDLITTAGFEVFGRMIDYELYANDELTELELHRLNNQSSIEEQPRSTAKPASPLVSGLNEKYNFENFVQGPGNRWTLAAAIAVADKPGDTYNPLFIYGGAGLGKTHLMHAIGNQILTDNPTARIKYVSSENFVNDYVNATRKNQMENFENTYRNLDLLLLDDVQFFSDKEGTKNEFFNTFNALYDKGSQIVLTSDRIPQELNNLEDRLVSRFSWGLTTDITAPDYETRMAILLIKSESSRLEFPSETLSYIAGQIDSNVRELEGALNRVEFVARANGIAVVDIETASQALRSLKNATQQSLSNLTIKKIQDEVANYYHISFSDLVGPKRPKEIAFPRQIAMYLVRELLGTSLPAIGTAFGGRDHTTVMYAYKQISDKMKNDMDVQKDIDSIKRKF.

Residues 1–77 form a domain I, interacts with DnaA modulators region; that stretch reads MASLNENQKF…GFEVFGRMID (77 aa). Residues 77–116 are domain II; the sequence is DYELYANDELTELELHRLNNQSSIEEQPRSTAKPASPLVS. Positions 117–333 are domain III, AAA+ region; that stretch reads GLNEKYNFEN…GALNRVEFVA (217 aa). Residues Gly161, Gly163, Lys164, and Thr165 each coordinate ATP. The interval 334–455 is domain IV, binds dsDNA; it reads RANGIAVVDI…KDIDSIKRKF (122 aa).

It belongs to the DnaA family. As to quaternary structure, oligomerizes as a right-handed, spiral filament on DNA at oriC.

The protein localises to the cytoplasm. In terms of biological role, plays an essential role in the initiation and regulation of chromosomal replication. ATP-DnaA binds to the origin of replication (oriC) to initiate formation of the DNA replication initiation complex once per cell cycle. Binds the DnaA box (a 9 base pair repeat at the origin) and separates the double-stranded (ds)DNA. Forms a right-handed helical filament on oriC DNA; dsDNA binds to the exterior of the filament while single-stranded (ss)DNA is stabiized in the filament's interior. The ATP-DnaA-oriC complex binds and stabilizes one strand of the AT-rich DNA unwinding element (DUE), permitting loading of DNA polymerase. After initiation quickly degrades to an ADP-DnaA complex that is not apt for DNA replication. Binds acidic phospholipids. This chain is Chromosomal replication initiator protein DnaA, found in Lactococcus lactis subsp. lactis (strain IL1403) (Streptococcus lactis).